Here is a 65-residue protein sequence, read N- to C-terminus: Large ribosomal subunit protein bL35 (65 aa).

The segment covering 1-16 (MPKMKTKKSAAKRFKV) has biased composition (basic residues). The tract at residues 1 to 25 (MPKMKTKKSAAKRFKVRGSGSIKRG) is disordered.

Belongs to the bacterial ribosomal protein bL35 family.

In Bordetella parapertussis (strain 12822 / ATCC BAA-587 / NCTC 13253), this protein is Large ribosomal subunit protein bL35.